We begin with the raw amino-acid sequence, 983 residues long: ER membrane protein complex subunit 1 (983 aa).

Residues 1–16 (MAAGLWALLLPLAAAV) form the signal peptide. At 17–952 (YEDQVGKFDW…FDVLKDDYDY (936 aa)) the chain is on the lumenal side. The cysteines at positions 221 and 231 are disulfide-linked. The N-linked (GlcNAc...) asparagine glycan is linked to Asn279. An intrachain disulfide couples Cys332 to Cys360. Residues Asn362, Asn808, and Asn903 are each glycosylated (N-linked (GlcNAc...) asparagine). The helical transmembrane segment at 953–973 (VLISSVLFGLVFATMITKRLA) threads the bilayer. At 974 to 983 (QVKLLNRAWR) the chain is on the cytoplasmic side.

The protein belongs to the EMC1 family. Component of the ER membrane protein complex (EMC).

The protein localises to the endoplasmic reticulum membrane. Its function is as follows. Part of the endoplasmic reticulum membrane protein complex (EMC) that enables the energy-independent insertion into endoplasmic reticulum membranes of newly synthesized membrane proteins. Preferentially accommodates proteins with transmembrane domains that are weakly hydrophobic or contain destabilizing features such as charged and aromatic residues. Involved in the cotranslational insertion of multi-pass membrane proteins in which stop-transfer membrane-anchor sequences become ER membrane spanning helices. It is also required for the post-translational insertion of tail-anchored/TA proteins in endoplasmic reticulum membranes. By mediating the proper cotranslational insertion of N-terminal transmembrane domains in an N-exo topology, with translocated N-terminus in the lumen of the ER, controls the topology of multi-pass membrane proteins like the G protein-coupled receptors. By regulating the insertion of various proteins in membranes, it is indirectly involved in many cellular processes. The sequence is that of ER membrane protein complex subunit 1 (EMC1) from Gallus gallus (Chicken).